A 240-amino-acid chain; its full sequence is Transcription factor bHLH47 (240 aa).

The span at 1–13 (MVSKTPSTSSDEA) shows a compositional bias: polar residues. The tract at residues 1–26 (MVSKTPSTSSDEANATADERCRKGKV) is disordered. The bHLH domain maps to 27-77 (PKRINKAVRERLKREHLNELFIELADTLELNQQNSGKASILCEATRFLKDV). The stretch at 98-131 (VTTEKNELKEETSVLETEISKLQNEIEARANQSK) forms a coiled coil. A compositionally biased stretch (polar residues) spans 128–138 (NQSKPDLNTSP). The segment at 128-153 (NQSKPDLNTSPAPEYHHHHYQQQHPE) is disordered.

In terms of assembly, homodimer. Forms heterodimer with PYEL proteins bHLH115, bHLH104 and ILR3. Expressed constitutively in roots, leaves, stems, and flowers.

The protein resides in the nucleus. In Arabidopsis thaliana (Mouse-ear cress), this protein is Transcription factor bHLH47 (BHLH47).